Reading from the N-terminus, the 245-residue chain is Biosynthetic peptidoglycan transglycosylase (245 aa).

The helical transmembrane segment at 19–39 threads the bilayer; that stretch reads IVYAGAVFAAAWLATQLFYFV.

This sequence belongs to the glycosyltransferase 51 family.

It localises to the cell inner membrane. It carries out the reaction [GlcNAc-(1-&gt;4)-Mur2Ac(oyl-L-Ala-gamma-D-Glu-L-Lys-D-Ala-D-Ala)](n)-di-trans,octa-cis-undecaprenyl diphosphate + beta-D-GlcNAc-(1-&gt;4)-Mur2Ac(oyl-L-Ala-gamma-D-Glu-L-Lys-D-Ala-D-Ala)-di-trans,octa-cis-undecaprenyl diphosphate = [GlcNAc-(1-&gt;4)-Mur2Ac(oyl-L-Ala-gamma-D-Glu-L-Lys-D-Ala-D-Ala)](n+1)-di-trans,octa-cis-undecaprenyl diphosphate + di-trans,octa-cis-undecaprenyl diphosphate + H(+). Its pathway is cell wall biogenesis; peptidoglycan biosynthesis. Peptidoglycan polymerase that catalyzes glycan chain elongation from lipid-linked precursors. This Burkholderia multivorans (strain ATCC 17616 / 249) protein is Biosynthetic peptidoglycan transglycosylase.